Consider the following 229-residue polypeptide: Ribonuclease 3 (229 aa).

One can recognise an RNase III domain in the interval 5 to 127 (LDRLERKLGY…LIGAIYLDTG (123 aa)). Glu40 serves as a coordination point for Mg(2+). Asp44 is a catalytic residue. Mg(2+)-binding residues include Asp113 and Glu116. The active site involves Glu116. The DRBM domain maps to 154–224 (DPKTRLQEFL…AAAALVALGV (71 aa)).

The protein belongs to the ribonuclease III family. As to quaternary structure, homodimer. Mg(2+) serves as cofactor.

Its subcellular location is the cytoplasm. It catalyses the reaction Endonucleolytic cleavage to 5'-phosphomonoester.. Its function is as follows. Digests double-stranded RNA. Involved in the processing of primary rRNA transcript to yield the immediate precursors to the large and small rRNAs (23S and 16S). Processes some mRNAs, and tRNAs when they are encoded in the rRNA operon. Processes pre-crRNA and tracrRNA of type II CRISPR loci if present in the organism. This is Ribonuclease 3 from Pseudomonas paraeruginosa (strain DSM 24068 / PA7) (Pseudomonas aeruginosa (strain PA7)).